The primary structure comprises 93 residues: Small ribosomal subunit protein uS19 (93 aa).

It belongs to the universal ribosomal protein uS19 family.

Functionally, protein S19 forms a complex with S13 that binds strongly to the 16S ribosomal RNA. The chain is Small ribosomal subunit protein uS19 from Maridesulfovibrio salexigens (strain ATCC 14822 / DSM 2638 / NCIMB 8403 / VKM B-1763) (Desulfovibrio salexigens).